Reading from the N-terminus, the 556-residue chain is 2-succinyl-5-enolpyruvyl-6-hydroxy-3-cyclohexene-1-carboxylate synthase (556 aa).

The protein belongs to the TPP enzyme family. MenD subfamily. As to quaternary structure, homodimer. Mg(2+) serves as cofactor. Mn(2+) is required as a cofactor. The cofactor is thiamine diphosphate.

It carries out the reaction isochorismate + 2-oxoglutarate + H(+) = 5-enolpyruvoyl-6-hydroxy-2-succinyl-cyclohex-3-ene-1-carboxylate + CO2. Its pathway is quinol/quinone metabolism; 1,4-dihydroxy-2-naphthoate biosynthesis; 1,4-dihydroxy-2-naphthoate from chorismate: step 2/7. It functions in the pathway quinol/quinone metabolism; menaquinone biosynthesis. Catalyzes the thiamine diphosphate-dependent decarboxylation of 2-oxoglutarate and the subsequent addition of the resulting succinic semialdehyde-thiamine pyrophosphate anion to isochorismate to yield 2-succinyl-5-enolpyruvyl-6-hydroxy-3-cyclohexene-1-carboxylate (SEPHCHC). The protein is 2-succinyl-5-enolpyruvyl-6-hydroxy-3-cyclohexene-1-carboxylate synthase of Klebsiella pneumoniae subsp. pneumoniae (strain ATCC 700721 / MGH 78578).